Reading from the N-terminus, the 1992-residue chain is E3 ubiquitin-protein ligase TRIP12 (1992 aa).

Over residues 1-10 the composition is skewed to polar residues; the sequence is MSNRPNNNPG. 3 disordered regions span residues 1–398, 797–817, and 938–1080; these read MSNR…DDSE, QRKPNPLANSNTSGYSESKKD, and SLLT…ASKD. Serine 2 is subject to N-acetylserine. Position 12 is a phosphoserine (serine 12). The segment covering 18-27 has biased composition (polar residues); sequence RNTAGAQPQD. A compositionally biased stretch (basic and acidic residues) spans 48–70; it reads DPDRANTSERQKTGQVPKKDNSR. 3 positions are modified to phosphoserine: serine 77, serine 85, and serine 100. Positions 78–88 are enriched in polar residues; sequence PDYNRTNSPSS. The span at 119-132 shows a compositional bias: polar residues; the sequence is EQQLKSAQSPSTSK. 2 stretches are compositionally biased toward low complexity: residues 154 to 166 and 175 to 216; these read SSCVKSGSGSEST and PTKL…SSTV. Lysine 181 is subject to N6-acetyllysine. Over residues 280–290 the composition is skewed to polar residues; that stretch reads PGSSKSETSKP. Residues serine 310 and serine 312 each carry the phosphoserine modification. Over residues 326 to 338 the composition is skewed to polar residues; sequence QKTTGSCASTSRR. Residues 346 to 358 are compositionally biased toward basic and acidic residues; that stretch reads GAAEARRQEKMAD. 2 stretches are compositionally biased toward polar residues: residues 360-371 and 803-812; these read ESNQEAVNSSAA and LANSNTSGYS. One can recognise a WWE domain in the interval 749 to 836; it reads MLKKGNAQNT…DPELAKSFIK (88 aa). Position 942 is a phosphoserine (serine 942). Residues 948–973 show a composition bias toward low complexity; that stretch reads TNGSGSMGSTTSVSSGTATAATHAAA. Serine 991 and serine 997 each carry phosphoserine. Basic residues predominate over residues 1001–1014; it reads KRKRLPKRGPRRPK. The residue at position 1016 (serine 1016) is a Phosphoserine. The segment covering 1017 to 1026 has biased composition (basic and acidic residues); the sequence is PPRDDDKVDN. A compositionally biased stretch (low complexity) spans 1029–1040; the sequence is KSPTTTQSPKSS. Serine 1030 carries the post-translational modification Phosphoserine. Positions 1041–1062 are enriched in polar residues; sequence FLASLNPKTWGRLSTQSNSNNI. Serine 1317, serine 1322, serine 1329, and serine 1376 each carry phosphoserine. Residue threonine 1377 is modified to Phosphothreonine. Disordered regions lie at residues 1407–1433 and 1568–1587; these read SNKDCVGGKRGRAQTAPTKTSPRNAKK and TNPEINQSDSQDSRVAPRLD. Residue lysine 1425 is modified to N6-acetyllysine. Serine 1427 is modified (phosphoserine). The tract at residues 1496–1570 is K-box; it reads EIIPTSEFIN…AMQRLLDTNP (75 aa). In terms of domain architecture, HECT spans 1885–1992; that stretch reads PDHGYTHDSR…REGQQSFHLS (108 aa). Cysteine 1959 acts as the Glycyl thioester intermediate in catalysis.

This sequence belongs to the UPL family. K-HECT subfamily. Interacts with MYC; leading to disrupt interaction with isoform p19ARF/ARF of CDKN2A. Interacts with TRADD; leading to disrupt interaction with isoform p19ARF/ARF of CDKN2A. Interacts with SMARCC1; leading to disrupt interaction with SMARCE1.

Its subcellular location is the nucleus. The protein localises to the nucleoplasm. The enzyme catalyses S-ubiquitinyl-[E2 ubiquitin-conjugating enzyme]-L-cysteine + [acceptor protein]-L-lysine = [E2 ubiquitin-conjugating enzyme]-L-cysteine + N(6)-ubiquitinyl-[acceptor protein]-L-lysine.. Its pathway is protein modification; protein ubiquitination. Functionally, E3 ubiquitin-protein ligase involved in ubiquitin fusion degradation (UFD) pathway and regulation of DNA repair. Part of the ubiquitin fusion degradation (UFD) pathway, a process that mediates ubiquitination of protein at their N-terminus, regardless of the presence of lysine residues in target proteins. Acts as a key regulator of DNA damage response by acting as a suppressor of RNF168, an E3 ubiquitin-protein ligase that promotes accumulation of 'Lys-63'-linked histone H2A and H2AX at DNA damage sites, thereby acting as a guard against excessive spreading of ubiquitinated chromatin at damaged chromosomes. In normal cells, mediates ubiquitination and degradation of isoform p19ARF/ARF of CDKN2A, a lysine-less tumor suppressor required for p53/TP53 activation under oncogenic stress. In cancer cells, however, isoform p19ARF/ARF and TRIP12 are located in different cell compartments, preventing isoform p19ARF/ARF ubiquitination and degradation. Does not mediate ubiquitination of isoform p16-INK4a of CDKN2A. Also catalyzes ubiquitination of NAE1 and SMARCE1, leading to their degradation. Ubiquitination and degradation of target proteins is regulated by interaction with proteins such as MYC, TRADD or SMARCC1, which disrupt the interaction between TRIP12 and target proteins. Mediates ubiquitination of ASXL1: following binding to N(6)-methyladenosine methylated DNA, ASXL1 is ubiquitinated by TRIP12, leading to its degradation and subsequent inactivation of the PR-DUB complex. The polypeptide is E3 ubiquitin-protein ligase TRIP12 (TRIP12) (Homo sapiens (Human)).